A 168-amino-acid chain; its full sequence is Photosystem I assembly protein Ycf3 (168 aa).

TPR repeat units lie at residues alanine 35–proline 68, serine 72–leucine 105, and glycine 120–asparagine 153.

It belongs to the Ycf3 family.

It localises to the plastid. The protein localises to the chloroplast thylakoid membrane. In terms of biological role, essential for the assembly of the photosystem I (PSI) complex. May act as a chaperone-like factor to guide the assembly of the PSI subunits. The chain is Photosystem I assembly protein Ycf3 from Drimys granadensis.